The sequence spans 340 residues: uncharacterized protein (340 aa).

The N-terminal stretch at 1–25 (MLGIRAMLVMLDYYWIQLITNNDTR) is a signal peptide. Topologically, residues 26–225 (SNNTDTIFVS…RRYMYLFSVS (200 aa)) are lumenal. N-linked (GlcNAc...) asparagine; by host glycans are attached at residues N27, N54, N57, N68, N72, N78, N83, N107, N118, N146, N173, and N180. The helical transmembrane segment at 226 to 246 (CAGITGTVSIILVSLSLLILI) threads the bilayer. Residues 247–340 (CYYRCGRLLI…PMHMVVCMPA (94 aa)) lie on the Cytoplasmic side of the membrane.

It belongs to the HHV-5 UL20 protein family.

The protein resides in the host endoplasmic reticulum membrane. This is an uncharacterized protein from Human cytomegalovirus (strain AD169) (HHV-5).